Here is a 132-residue protein sequence, read N- to C-terminus: Agouti-signaling protein (132 aa).

Residues 1-22 form the signal peptide; the sequence is MDVTRLLLATLLVFLCFFTAYS. Asparagine 39 is a glycosylation site (N-linked (GlcNAc...) asparagine). The segment at 60–88 is disordered; sequence KQISRKEAEKKRSSKKEASMKKVARPRTP. The segment covering 63–79 has biased composition (basic and acidic residues); it reads SRKEAEKKRSSKKEASM. Intrachain disulfides connect cysteine 93/cysteine 108, cysteine 100/cysteine 114, cysteine 107/cysteine 125, cysteine 111/cysteine 132, and cysteine 116/cysteine 123. Positions 93–132 constitute an Agouti domain; it reads CVATRDSCKPPAPACCDPCASCQCRFFRSACSCRVLSLNC.

The protein resides in the secreted. In terms of biological role, involved in the regulation of melanogenesis. The binding of ASP to MC1R precludes alpha-MSH initiated signaling and thus blocks production of cAMP, leading to a down-regulation of eumelanogenesis (brown/black pigment) and thus increasing synthesis of pheomelanin (yellow/red pigment). This Macaca cyclopis (Taiwan macaque) protein is Agouti-signaling protein (ASIP).